A 599-amino-acid polypeptide reads, in one-letter code: Interleukin-18 receptor accessory protein (599 aa).

A signal peptide spans 1 to 19; the sequence is MLCLGWIFLWLVAGERIKG. Topologically, residues 20–356 are extracellular; it reads FNISGCSTKK…TQSVQLKEKR (337 aa). 3 N-linked (GlcNAc...) asparagine glycosylation sites follow: Asn21, Asn119, and Asn152. Residues Cys46 and Cys126 are joined by a disulfide bond. Ig-like C2-type domains lie at 149 to 235 and 251 to 353; these read PQTN…WTVR and PDIL…VQLK. 4 cysteine pairs are disulfide-bonded: Cys155–Cys180, Cys175–Cys221, Cys180–Cys221, and Cys273–Cys337. N-linked (GlcNAc...) asparagine glycosylation occurs at Asn345. Residues 357–377 traverse the membrane as a helical segment; sequence GVVLLYILLGTIGTLVAVLAA. The Cytoplasmic portion of the chain corresponds to 378 to 599; it reads SALLYRHWIE…TGRSSQPKEW (222 aa). Residues 406–559 enclose the TIR domain; that stretch reads KDFDAFVSYA…RFWAKMRYHM (154 aa). Glu493 is an active-site residue.

This sequence belongs to the interleukin-1 receptor family. In terms of assembly, forms a ternary complex with IL18 and IL18R1. Within this complex, IL18R1 is involved in ligand-binding and IL18RAP in signaling leading to NF-kappa-B and JNK activation. N-glycosylated. In terms of tissue distribution, detected in adrenal gland, bone marrow, brain, fetal brain, fetal liver, heart, kidney, lung, liver, peripheral blood leukocytes, placenta, prostate, salivary gland, skeletal muscle, spinal cord, testis, thymus, thyroid, trachea and uterus. Strongly expressed in peripheral blood leukocytes and spleen and, to a lesser extent, in colon. Specifically coexpressed with IL18R1 in T-helper 1 (Th1)cells.

Its subcellular location is the cell membrane. The enzyme catalyses NAD(+) + H2O = ADP-D-ribose + nicotinamide + H(+). Within the IL18 receptor complex, does not mediate IL18-binding, but involved in IL18-dependent signal transduction, leading to NF-kappa-B and JNK activation. May play a role in IL18-mediated IFNG synthesis from T-helper 1 (Th1) cells. In Homo sapiens (Human), this protein is Interleukin-18 receptor accessory protein.